We begin with the raw amino-acid sequence, 480 residues long: NADH-quinone oxidoreductase subunit N (480 aa).

A run of 13 helical transmembrane segments spans residues 5 to 25 (NFLCIEQELKLIALLVILFLY), 40 to 60 (IAIVGFAIVIISEFPPYFTMY), 69 to 89 (ISSQLTFFMKSILNVATFLVF), 110 to 130 (VIMLISLLGMYFMISAENFVM), 162 to 182 (YILTSALSSGVMLFGLSFLYG), 204 to 224 (LGFVFFFGGLGFKLSLVPFHL), 237 to 257 (VTAYLSVVSKGAATFALIFVL), 266 to 286 (LIWNNILCWLLLATIVLGNLF), 296 to 316 (FFAFSSISQAGYILLGIIAGT), 324 to 344 (IFYTLVYLFSNLAAFGVIASV), 368 to 388 (AFVMMLAVFSLGGIPPFAGFF), 404 to 424 (ILVFIALLNTVMSLYYYLLIV), and 450 to 470 (MVICTIGIFVIGFLSAIYEYI).

Belongs to the complex I subunit 2 family. As to quaternary structure, NDH-1 is composed of 14 different subunits. Subunits NuoA, H, J, K, L, M, N constitute the membrane sector of the complex.

The protein resides in the cell inner membrane. It catalyses the reaction a quinone + NADH + 5 H(+)(in) = a quinol + NAD(+) + 4 H(+)(out). NDH-1 shuttles electrons from NADH, via FMN and iron-sulfur (Fe-S) centers, to quinones in the respiratory chain. The immediate electron acceptor for the enzyme in this species is believed to be a menaquinone. Couples the redox reaction to proton translocation (for every two electrons transferred, four hydrogen ions are translocated across the cytoplasmic membrane), and thus conserves the redox energy in a proton gradient. The chain is NADH-quinone oxidoreductase subunit N from Azobacteroides pseudotrichonymphae genomovar. CFP2.